A 1199-amino-acid chain; its full sequence is Tubulin monoglutamylase TTLL4 (1199 aa).

Over residues 1-25 the composition is skewed to polar residues; that stretch reads MASAGTQHYSIGLRQKNSFKQSGPS. Disordered stretches follow at residues 1–43, 472–517, and 525–544; these read MASA…RVWP, IQLG…ELVD, and RDENEEEEGDSECSSLSAVS. Over residues 477 to 495 the composition is skewed to basic and acidic residues; the sequence is SEKERPEEARELDSSDRDI. Over residues 506-517 the composition is skewed to acidic residues; the sequence is AETEDTEEELVD. The 344-residue stretch at 604 to 947 folds into the TTL domain; that stretch reads RKLLRWKMST…VLPNAEDIIS (344 aa). Residue S691 is modified to Phosphoserine. Residues K721, 727–728, 749–752, and 762–764 contribute to the ATP site; these read RG, QRYL, and KFD. R727 contributes to the a protein binding site. Residue R788 participates in L-glutamate binding. An ATP-binding site is contributed by 809–810; the sequence is TN. Residues Y811, S812, and K833 each coordinate L-glutamate. Positions 893, 906, and 908 each coordinate Mg(2+). The c-MTBD region stretch occupies residues 918–1029; it reads PLDISIKGQM…RGQFERIFPS (112 aa). K924 lines the L-glutamate pocket. Over residues 1130-1141 the composition is skewed to polar residues; it reads GTTPKSKKTQAG. The interval 1130 to 1199 is disordered; sequence GTTPKSKKTQ…ISDSLLAVSP (70 aa). Residues 1151-1160 are compositionally biased toward basic and acidic residues; it reads SSKDSEDTSK. Over residues 1164 to 1192 the composition is skewed to polar residues; the sequence is LSTQTLPVIKCSGQTSRLSASSTFQSISD.

It belongs to the tubulin--tyrosine ligase family. It depends on Mg(2+) as a cofactor.

The protein localises to the cytoplasm. Its subcellular location is the cell projection. It localises to the cilium. It is found in the cytoskeleton. The protein resides in the cilium basal body. It catalyses the reaction L-glutamyl-[protein] + L-glutamate + ATP = gamma-L-glutamyl-L-glutamyl-[protein] + ADP + phosphate + H(+). In terms of biological role, monoglutamylase which modifies both tubulin and non-tubulin proteins, adding a single glutamate on the gamma-carboxyl group of specific glutamate residues of target proteins. Involved in the side-chain initiation step of the polyglutamylation reaction but not in the elongation step. Preferentially modifies beta-tail tubulin over the alpha-tubulin. Monoglutamylates nucleosome assembly proteins NAP1L1 and NAP1L4. Monoglutamylates nucleotidyltransferase CGAS, leading to inhibition of CGAS catalytic activity, thereby preventing antiviral defense function. Involved in KLF4 glutamylation which impedes its ubiquitination, thereby leading to somatic cell reprogramming, pluripotency maintenance and embryogenesis. This is Tubulin monoglutamylase TTLL4 from Homo sapiens (Human).